Consider the following 1088-residue polypeptide: Leucine-rich repeat receptor-like protein kinase PEPR2 (1088 aa).

An N-terminal signal peptide occupies residues 1–26 (MRNLGLLEITLLCSLFVYFRIDSVSS). At 27 to 739 (LNSDGLALLS…QVKLSTWKIA (713 aa)) the chain is on the extracellular side. N-linked (GlcNAc...) asparagine glycans are attached at residues Asn55, Asn82, and Asn122. 26 LRR repeats span residues 75–99 (GNVV…IGEL), 100–122 (KSLV…TLGN), 123–146 (CTSL…IFGS), 147–170 (LQNL…SVGG), 172–194 (IELV…LLGN), 195–219 (CSKL…LYLL), 221–243 (NLGE…SSNC), 244–267 (KKLV…IGNC), 269–291 (SLHS…MGML), 292–315 (RKVS…LGNC), 316–339 (SSLE…LSKL), 341–363 (KLQS…IWKI), 365–387 (SLTQ…VTQL), 388–411 (KHLK…LGLN), 412–435 (RSLE…LCHG), 436–459 (QKLR…IRQC), 460–485 (KTLE…SLSL), 487–506 (YVNL…LGSC), 507–529 (KNLL…ELGN), 530–554 (LQSL…LSGC), 556–577 (RLLY…SFRS), 578–602 (WKSL…LAEL), 603–627 (DRLS…GLLK), 629–651 (LRYG…LGAL), 652–676 (INLE…SLKS), and 678–698 (NQVD…LLSN). Asn149, Asn159, Asn183, Asn194, Asn209, Asn229, Asn266, Asn279, and Asn314 each carry an N-linked (GlcNAc...) asparagine glycan. N-linked (GlcNAc...) asparagine glycans are attached at residues Asn373 and Asn411. 2 N-linked (GlcNAc...) asparagine glycosylation sites follow: Asn537 and Asn568. Residues Asn658 and Asn698 are each glycosylated (N-linked (GlcNAc...) asparagine). The chain crosses the membrane as a helical span at residues 740 to 760 (LIAAGSSLSVLALLFALFLVL). Topologically, residues 761–1088 (CRCKRGTKTE…FVRSTSGSVH (328 aa)) are cytoplasmic. At Thr791 the chain carries Phosphothreonine. Residues 794 to 1080 (LDDKYIIGRG…KDLTDLESFV (287 aa)) form the Protein kinase domain. ATP-binding positions include 800–808 (IGRGAHGVV) and Lys822. Tyr868 and Tyr908 each carry phosphotyrosine. The active-site Proton acceptor is Asp921. Residues Tyr962 and Tyr969 each carry the phosphotyrosine modification.

The protein belongs to the protein kinase superfamily. Ser/Thr protein kinase family. As to quaternary structure, interacts with BAK1. Interacts with CLE14.

Its subcellular location is the cell membrane. The catalysed reaction is L-seryl-[protein] + ATP = O-phospho-L-seryl-[protein] + ADP + H(+). It catalyses the reaction L-threonyl-[protein] + ATP = O-phospho-L-threonyl-[protein] + ADP + H(+). In terms of biological role, acts as a receptor for PEP defense peptides. Unlike typical immune receptors, senses an endogenous elicitor that potentiates PAMP-inducible plant responses. In Arabidopsis thaliana (Mouse-ear cress), this protein is Leucine-rich repeat receptor-like protein kinase PEPR2 (PEPR2).